The sequence spans 286 residues: 4-hydroxy-tetrahydrodipicolinate synthase 2 (286 aa).

Thr-45 contacts pyruvate. Residue Tyr-133 is the Proton donor/acceptor of the active site. The active-site Schiff-base intermediate with substrate is Lys-161. Ile-203 provides a ligand contact to pyruvate.

The protein belongs to the DapA family. As to quaternary structure, homotetramer; dimer of dimers.

The protein localises to the cytoplasm. It carries out the reaction L-aspartate 4-semialdehyde + pyruvate = (2S,4S)-4-hydroxy-2,3,4,5-tetrahydrodipicolinate + H2O + H(+). Its pathway is amino-acid biosynthesis; L-lysine biosynthesis via DAP pathway; (S)-tetrahydrodipicolinate from L-aspartate: step 3/4. Its function is as follows. Catalyzes the condensation of (S)-aspartate-beta-semialdehyde [(S)-ASA] and pyruvate to 4-hydroxy-tetrahydrodipicolinate (HTPA). This is 4-hydroxy-tetrahydrodipicolinate synthase 2 from Clostridium acetobutylicum (strain ATCC 824 / DSM 792 / JCM 1419 / IAM 19013 / LMG 5710 / NBRC 13948 / NRRL B-527 / VKM B-1787 / 2291 / W).